Consider the following 386-residue polypeptide: Methionine aminopeptidase 1 (386 aa).

Residue Ala-2 is modified to N-acetylalanine. A C6H2-type zinc finger spans residues 6–59 (TRVCETDGCSSEAKLQCPTCIKLGIQGSYFCSQECFKGSWATHKLLHKKAKDEK). Positions 9, 14, 22, 25, 36, 40, 48, and 52 each coordinate Zn(2+). An a protein-binding site is contributed by His-203. Zn(2+)-binding residues include Asp-220, Asp-231, and His-294. His-301 serves as a coordination point for a protein. The Zn(2+) site is built by Glu-327 and Glu-358.

It belongs to the peptidase M24A family. Methionine aminopeptidase type 1 subfamily. As to quaternary structure, associates with the 60S ribosomal subunit of the 80S translational complex. The cofactor is Zn(2+). Co(2+) serves as cofactor. Requires Mn(2+) as cofactor. Fe(2+) is required as a cofactor.

It is found in the cytoplasm. It catalyses the reaction Release of N-terminal amino acids, preferentially methionine, from peptides and arylamides.. Its function is as follows. Cotranslationally removes the N-terminal methionine from nascent proteins. The N-terminal methionine is often cleaved when the second residue in the primary sequence is small and uncharged (Met-Ala-, Cys, Gly, Pro, Ser, Thr, or Val). Required for normal progression through the cell cycle. The sequence is that of Methionine aminopeptidase 1 (METAP1) from Homo sapiens (Human).